The chain runs to 379 residues: Cytochrome b (379 aa).

4 helical membrane-spanning segments follow: residues 33-53 (LGSL…FLAM), 77-98 (WTIR…YLHI), 113-133 (WNTG…GYVL), and 178-198 (FFTL…THLL). 2 residues coordinate heme b: His-83 and His-97. Residues His-182 and His-196 each coordinate heme b. Position 201 (His-201) interacts with a ubiquinone. The next 4 membrane-spanning stretches (helical) occupy residues 226–246 (IKDI…TLLH), 288–308 (LGGV…PMTH), 320–340 (ISQC…WIGG), and 347–367 (FTTI…ILTP).

It belongs to the cytochrome b family. In terms of assembly, the cytochrome bc1 complex contains 11 subunits: 3 respiratory subunits (MT-CYB, CYC1 and UQCRFS1), 2 core proteins (UQCRC1 and UQCRC2) and 6 low-molecular weight proteins (UQCRH/QCR6, UQCRB/QCR7, UQCRQ/QCR8, UQCR10/QCR9, UQCR11/QCR10 and a cleavage product of UQCRFS1). This cytochrome bc1 complex then forms a dimer. It depends on heme b as a cofactor.

The protein resides in the mitochondrion inner membrane. Functionally, component of the ubiquinol-cytochrome c reductase complex (complex III or cytochrome b-c1 complex) that is part of the mitochondrial respiratory chain. The b-c1 complex mediates electron transfer from ubiquinol to cytochrome c. Contributes to the generation of a proton gradient across the mitochondrial membrane that is then used for ATP synthesis. The sequence is that of Cytochrome b (MT-CYB) from Bradypus tridactylus (Pale-throated three-toed sloth).